The chain runs to 335 residues: Heme A synthase (335 aa).

Transmembrane regions (helical) follow at residues 9–29, 90–110, 120–140, 156–176, 197–217, 255–275, 283–303, and 309–329; these read VAIW…IGGF, YVHR…FIYF, VVIR…TGWY, MLTL…YQFF, VGII…VAGL, VQFI…VLTI, VYVM…TLLL, and IAIS…CFLC. Residue histidine 259 participates in heme binding. A heme-binding site is contributed by histidine 313.

Belongs to the COX15/CtaA family. Type 2 subfamily. Interacts with CtaB. Requires heme b as cofactor.

It is found in the cell membrane. The catalysed reaction is Fe(II)-heme o + 2 A + H2O = Fe(II)-heme a + 2 AH2. It participates in porphyrin-containing compound metabolism; heme A biosynthesis; heme A from heme O: step 1/1. Its function is as follows. Catalyzes the conversion of heme O to heme A by two successive hydroxylations of the methyl group at C8. The first hydroxylation forms heme I, the second hydroxylation results in an unstable dihydroxymethyl group, which spontaneously dehydrates, resulting in the formyl group of heme A. The protein is Heme A synthase of Wolbachia sp. subsp. Brugia malayi (strain TRS).